Consider the following 445-residue polypeptide: Acyl-CoA Delta-4 desaturase (445 aa).

The Cytochrome b5 heme-binding domain occupies 19–96 (AGVYTWEEVQ…MKPLLVGELA (78 aa)). 4 helical membrane-spanning segments follow: residues 132-152 (LFFL…LLMV), 153-173 (WHWG…ATAQ), 266-286 (YFFL…NIMM), and 307-327 (YMLC…MMFA).

The protein belongs to the fatty acid desaturase type 1 family.

The protein localises to the membrane. It catalyses the reaction (8Z,11Z,14Z,17Z)-eicosatetraenoyl-CoA + 2 Fe(II)-[cytochrome b5] + O2 + 2 H(+) = (5Z,8Z,11Z,14Z,17Z)-eicosapentaenoyl-CoA + 2 Fe(III)-[cytochrome b5] + 2 H2O. The catalysed reaction is (7Z,10Z,13Z,16Z)-docosatetraenoyl-CoA + 2 Fe(II)-[cytochrome b5] + O2 + 2 H(+) = (4Z,7Z,10Z,13Z,16Z)-docosapentaenoyl-CoA + 2 Fe(III)-[cytochrome b5] + 2 H2O. The enzyme catalyses (7Z,10Z,13Z,16Z,19Z)-docosapentaenoyl-CoA + 2 Fe(II)-[cytochrome b5] + O2 + 2 H(+) = (4Z,7Z,10Z,13Z,16Z,19Z)-docosahexaenoyl-CoA + 2 Fe(III)-[cytochrome b5] + 2 H2O. Its pathway is lipid metabolism; polyunsaturated fatty acid biosynthesis. Its function is as follows. Fatty acid desaturase with bifunctional delta-4 and delta-5 activities. Component of a lipid metabolic pathway that catalyzes the biosynthesis of polyunsaturated fatty acids (PUFA) with preference toward n-3 substrates and Delta(4)function. This is Acyl-CoA Delta-4 desaturase from Siganus canaliculatus (White-spotted spinefoot).